A 329-amino-acid polypeptide reads, in one-letter code: MTRMKILTEAELRGIVPLDREAVACVEDAFRALATKAVAMPPILRLDIPEHRGEVDVKTAYVPGLDGFAIKISPGFFDNPKIGLPSTNGMMVLLSSKTGLVQALLLDNGYLTDVRTAAAGAVAARRLSREDSSVAAVFGAGMQARLQLEALALVRPIREARIWARDAAKAEAAAIALGGKLGFAVKAETDPRAAITGADIIVTTTPSETPVLKAEWLEPGQHVTAMGSDAEHKNEIDPHAIARATYVADSLKQTRRLGELHHAIAAHLMSAEAEFPELGQVIAGLKPGRTRADEITIADLTGTGIQDTAIATLAFARANAADAGTTFES.

Belongs to the ornithine cyclodeaminase/mu-crystallin family.

The polypeptide is Putative dehydrogenase RB0419 (Rhizobium meliloti (strain 1021) (Ensifer meliloti)).